Consider the following 217-residue polypeptide: Thiamine-phosphate synthase (217 aa).

Residues 42–46 (QFRDK) and aspartate 77 each bind 4-amino-2-methyl-5-(diphosphooxymethyl)pyrimidine. Mg(2+) is bound by residues aspartate 78 and aspartate 97. A 4-amino-2-methyl-5-(diphosphooxymethyl)pyrimidine-binding site is contributed by serine 117. A 2-[(2R,5Z)-2-carboxy-4-methylthiazol-5(2H)-ylidene]ethyl phosphate-binding site is contributed by 144–146 (TIS). Residue lysine 147 participates in 4-amino-2-methyl-5-(diphosphooxymethyl)pyrimidine binding. Residues glycine 175 and 195-196 (IT) contribute to the 2-[(2R,5Z)-2-carboxy-4-methylthiazol-5(2H)-ylidene]ethyl phosphate site.

The protein belongs to the thiamine-phosphate synthase family. Requires Mg(2+) as cofactor.

The catalysed reaction is 2-[(2R,5Z)-2-carboxy-4-methylthiazol-5(2H)-ylidene]ethyl phosphate + 4-amino-2-methyl-5-(diphosphooxymethyl)pyrimidine + 2 H(+) = thiamine phosphate + CO2 + diphosphate. The enzyme catalyses 2-(2-carboxy-4-methylthiazol-5-yl)ethyl phosphate + 4-amino-2-methyl-5-(diphosphooxymethyl)pyrimidine + 2 H(+) = thiamine phosphate + CO2 + diphosphate. It carries out the reaction 4-methyl-5-(2-phosphooxyethyl)-thiazole + 4-amino-2-methyl-5-(diphosphooxymethyl)pyrimidine + H(+) = thiamine phosphate + diphosphate. The protein operates within cofactor biosynthesis; thiamine diphosphate biosynthesis; thiamine phosphate from 4-amino-2-methyl-5-diphosphomethylpyrimidine and 4-methyl-5-(2-phosphoethyl)-thiazole: step 1/1. Condenses 4-methyl-5-(beta-hydroxyethyl)thiazole monophosphate (THZ-P) and 2-methyl-4-amino-5-hydroxymethyl pyrimidine pyrophosphate (HMP-PP) to form thiamine monophosphate (TMP). The protein is Thiamine-phosphate synthase of Levilactobacillus brevis (strain ATCC 367 / BCRC 12310 / CIP 105137 / JCM 1170 / LMG 11437 / NCIMB 947 / NCTC 947) (Lactobacillus brevis).